Reading from the N-terminus, the 293-residue chain is MDFIAILIGLGPLLGWGLFPTIASKFGGRPVNQIFGATVGTLIFAIVLALFKGIGLPGGMALVFSLISGAGWAFGQIITFKAFELVGSSRAMPITTAFQLLGASLWGVFALGNWPGITNKIIGFLALLVILIGARMTVWTETKQQEYSKNLRSAVLLLLVGEIGYWIYSAAPQATDIGGFKAFLPQAIGMVIVAVIYALMNMSKGNAFKEKVSWQQIISGFFFAFAALTYLISAQPNMNGLATGFVLSQTSVVLATLTGIFFLNQKKTSKELMITIVGLVLILVAASITVFIK.

Helical transmembrane passes span 5–24 (AILI…TIAS), 34–51 (IFGA…LALF), 58–80 (GGMA…IITF), 95–114 (TTAF…LGNW), 121–138 (IIGF…RMTV), 153–170 (SAVL…IYSA), 177–199 (IGGF…IYAL), 212–234 (VSWQ…LISA), 241–263 (LATG…IFFL), and 273–292 (MITI…TVFI).

The protein belongs to the GRP transporter (TC 2.A.7.5) family.

The protein resides in the cell membrane. Functionally, could be involved in the uptake of ribose. This Staphylococcus epidermidis (strain ATCC 12228 / FDA PCI 1200) protein is Putative ribose uptake protein RbsU (rbsU).